The chain runs to 60 residues: Small ribosomal subunit protein bS21 (60 aa).

The segment at 41-60 (PEEKRKRKAIARRRQRSRRR) is disordered. Residues 45–60 (RKRKAIARRRQRSRRR) show a composition bias toward basic residues.

Belongs to the bacterial ribosomal protein bS21 family.

This Gloeothece citriformis (strain PCC 7424) (Cyanothece sp. (strain PCC 7424)) protein is Small ribosomal subunit protein bS21.